Consider the following 317-residue polypeptide: Retinol dehydrogenase 16 (317 aa).

33–57 (FITGCDSGFGKLLARQLDARGLRVL) contacts NAD(+). Ser164 provides a ligand contact to substrate. The active-site Proton acceptor is the Tyr176. Residues 289 to 309 (LLYLPMSYMPTFLVDAIMYWV) traverse the membrane as a helical segment.

This sequence belongs to the short-chain dehydrogenases/reductases (SDR) family. Homodimer. In terms of processing, not N-glycosylated. In terms of tissue distribution, highly expressed in adult liver (at protein level). Detected in endometrium, liver and foreskin. Detected in the spineous layers of adult skin, and at lower levels in basal and granular skin layers. Detected in fetal liver and lung.

It is found in the microsome membrane. The protein localises to the endoplasmic reticulum membrane. It catalyses the reaction all-trans-retinol--[retinol-binding protein] + NAD(+) = all-trans-retinal--[retinol-binding protein] + NADH + H(+). The enzyme catalyses all-trans-retinol + NAD(+) = all-trans-retinal + NADH + H(+). The catalysed reaction is 13-cis-retinol + NAD(+) = 13-cis-retinal + NADH + H(+). It carries out the reaction 11-cis-retinol + NAD(+) = 11-cis-retinal + NADH + H(+). It catalyses the reaction 9-cis-retinol + NAD(+) = 9-cis-retinal + NADH + H(+). The enzyme catalyses 5alpha-androstane-3alpha,17beta-diol + NAD(+) = 17beta-hydroxy-5alpha-androstan-3-one + NADH + H(+). The catalysed reaction is androsterone + NAD(+) = 5alpha-androstan-3,17-dione + NADH + H(+). It participates in cofactor metabolism; retinol metabolism. Inhibited by citral, perillyl alcohol, geraniol, farnesol and geranyl geraniol. Its function is as follows. Oxidoreductase with a preference for NAD. Oxidizes all-trans-retinol, 9-cis-retinol, 11-cis-retinol and 13-cis-retinol to the corresponding aldehydes. Has higher activity towards CRBP-bound retinol than with free retinol. Also oxidizes 3-alpha-hydroxysteroids. Oxidizes androstanediol and androsterone to dihydrotestosterone and androstanedione. Can also catalyze the reverse reaction. This chain is Retinol dehydrogenase 16, found in Homo sapiens (Human).